The primary structure comprises 159 residues: Endoribonuclease YbeY (159 aa).

Zn(2+) contacts are provided by His124, His128, and His134.

This sequence belongs to the endoribonuclease YbeY family. Zn(2+) is required as a cofactor.

It is found in the cytoplasm. In terms of biological role, single strand-specific metallo-endoribonuclease involved in late-stage 70S ribosome quality control and in maturation of the 3' terminus of the 16S rRNA. The sequence is that of Endoribonuclease YbeY from Halalkalibacterium halodurans (strain ATCC BAA-125 / DSM 18197 / FERM 7344 / JCM 9153 / C-125) (Bacillus halodurans).